We begin with the raw amino-acid sequence, 156 residues long: SsrA-binding protein (156 aa).

The disordered stretch occupies residues 131–156 (YDKRQTLREQQDKREALRVMRERNRG).

Belongs to the SmpB family.

Its subcellular location is the cytoplasm. Its function is as follows. Required for rescue of stalled ribosomes mediated by trans-translation. Binds to transfer-messenger RNA (tmRNA), required for stable association of tmRNA with ribosomes. tmRNA and SmpB together mimic tRNA shape, replacing the anticodon stem-loop with SmpB. tmRNA is encoded by the ssrA gene; the 2 termini fold to resemble tRNA(Ala) and it encodes a 'tag peptide', a short internal open reading frame. During trans-translation Ala-aminoacylated tmRNA acts like a tRNA, entering the A-site of stalled ribosomes, displacing the stalled mRNA. The ribosome then switches to translate the ORF on the tmRNA; the nascent peptide is terminated with the 'tag peptide' encoded by the tmRNA and targeted for degradation. The ribosome is freed to recommence translation, which seems to be the essential function of trans-translation. The chain is SsrA-binding protein from Arthrobacter sp. (strain FB24).